A 158-amino-acid chain; its full sequence is SsrA-binding protein (158 aa).

Residues 136–151 show a composition bias toward basic and acidic residues; the sequence is KRADSKSRDWARDKQR. Residues 136 to 158 are disordered; it reads KRADSKSRDWARDKQRIMKHSTR.

This sequence belongs to the SmpB family.

The protein localises to the cytoplasm. Required for rescue of stalled ribosomes mediated by trans-translation. Binds to transfer-messenger RNA (tmRNA), required for stable association of tmRNA with ribosomes. tmRNA and SmpB together mimic tRNA shape, replacing the anticodon stem-loop with SmpB. tmRNA is encoded by the ssrA gene; the 2 termini fold to resemble tRNA(Ala) and it encodes a 'tag peptide', a short internal open reading frame. During trans-translation Ala-aminoacylated tmRNA acts like a tRNA, entering the A-site of stalled ribosomes, displacing the stalled mRNA. The ribosome then switches to translate the ORF on the tmRNA; the nascent peptide is terminated with the 'tag peptide' encoded by the tmRNA and targeted for degradation. The ribosome is freed to recommence translation, which seems to be the essential function of trans-translation. In Photobacterium profundum (strain SS9), this protein is SsrA-binding protein.